The primary structure comprises 258 residues: MLAKRIIPCLDVRDGQVVKGVQFRNHEIIGDIVPLAKRYADEGADELVFYDITASSDGRVVDKSWVSRVAEVIDIPFCVAGGIKSLEDAAQILSFGADKISINSPALADPTLITRLADRFGVQCIVVGIDTWFDAETGKYHVNQYTGDETRTRVTQWETLDWVEEVQKRGAGEIVLNMMNQDGVRNGYDLQQLAKVRAVCHVPLIASGGAGTMEHFLEAFRDANVDGALAASVFHKQIINIGELKAYLAAQGVEIRVC.

Active-site residues include Asp-11 and Asp-130.

It belongs to the HisA/HisF family. Heterodimer of HisH and HisF.

The protein resides in the cytoplasm. The catalysed reaction is 5-[(5-phospho-1-deoxy-D-ribulos-1-ylimino)methylamino]-1-(5-phospho-beta-D-ribosyl)imidazole-4-carboxamide + L-glutamine = D-erythro-1-(imidazol-4-yl)glycerol 3-phosphate + 5-amino-1-(5-phospho-beta-D-ribosyl)imidazole-4-carboxamide + L-glutamate + H(+). The protein operates within amino-acid biosynthesis; L-histidine biosynthesis; L-histidine from 5-phospho-alpha-D-ribose 1-diphosphate: step 5/9. Functionally, IGPS catalyzes the conversion of PRFAR and glutamine to IGP, AICAR and glutamate. The HisF subunit catalyzes the cyclization activity that produces IGP and AICAR from PRFAR using the ammonia provided by the HisH subunit. In Klebsiella pneumoniae (strain 342), this protein is Imidazole glycerol phosphate synthase subunit HisF.